Reading from the N-terminus, the 167-residue chain is 6,7-dimethyl-8-ribityllumazine synthase (167 aa).

5-amino-6-(D-ribitylamino)uracil-binding positions include phenylalanine 26, 60-62 (AFE), and 89-91 (AII). 94 to 95 (ET) is a (2S)-2-hydroxy-3-oxobutyl phosphate binding site. The Proton donor role is filled by histidine 97. A 5-amino-6-(D-ribitylamino)uracil-binding site is contributed by phenylalanine 122. Arginine 136 serves as a coordination point for (2S)-2-hydroxy-3-oxobutyl phosphate.

This sequence belongs to the DMRL synthase family. As to quaternary structure, forms an icosahedral capsid composed of 60 subunits, arranged as a dodecamer of pentamers.

It carries out the reaction (2S)-2-hydroxy-3-oxobutyl phosphate + 5-amino-6-(D-ribitylamino)uracil = 6,7-dimethyl-8-(1-D-ribityl)lumazine + phosphate + 2 H2O + H(+). It functions in the pathway cofactor biosynthesis; riboflavin biosynthesis; riboflavin from 2-hydroxy-3-oxobutyl phosphate and 5-amino-6-(D-ribitylamino)uracil: step 1/2. Its function is as follows. Catalyzes the formation of 6,7-dimethyl-8-ribityllumazine by condensation of 5-amino-6-(D-ribitylamino)uracil with 3,4-dihydroxy-2-butanone 4-phosphate. This is the penultimate step in the biosynthesis of riboflavin. The protein is 6,7-dimethyl-8-ribityllumazine synthase of Ruthia magnifica subsp. Calyptogena magnifica.